The sequence spans 233 residues: Probable tetraheme cytochrome c-type (233 aa).

The first 28 residues, Met1–Gly28, serve as a signal peptide directing secretion. Heme-binding residues include Cys39, Cys42, Met45, Cys67, Cys70, His71, Glu93, Cys131, Cys134, His135, Cys159, Cys162, His163, and His168. The segment at Gln182–Glu233 is disordered. 2 stretches are compositionally biased toward acidic residues: residues Asp191–Asp214 and Ser224–Glu233.

The protein belongs to the NapC/NirT/NrfH family. Post-translationally, binds 4 heme groups per subunit.

The protein localises to the periplasm. The polypeptide is Probable tetraheme cytochrome c-type (cycX1) (Nitrosomonas europaea (strain ATCC 19718 / CIP 103999 / KCTC 2705 / NBRC 14298)).